Consider the following 681-residue polypeptide: Sodium-dependent phosphate transporter 1 (681 aa).

A run of 6 helical transmembrane segments spans residues Asn25–Ala45, Ala66–Ser86, Leu106–Phe126, Ile162–Phe182, Ala201–Gly221, and Gly234–Val254. The segment at Val266–Val295 is disordered. A phosphoserine mark is found at Ser269 and Ser273. The segment covering Leu275 to Lys289 has biased composition (basic and acidic residues). The next 4 helical transmembrane spans lie at Val513–Gly533, Ala561–Trp581, Phe602–Ile622, and Ile652–Ala672.

This sequence belongs to the inorganic phosphate transporter (PiT) (TC 2.A.20) family. As to expression, ubiquitously expressed.

The protein localises to the cell membrane. The catalysed reaction is 2 Na(+)(out) + phosphate(out) = 2 Na(+)(in) + phosphate(in). Functionally, sodium-phosphate symporter which preferentially transports the monovalent form of phosphate with a stoichiometry of two sodium ions per phosphate ion. May play a role in extracellular matrix and cartilage calcification as well as in vascular calcification. Essential for cell proliferation but this function is independent of its phosphate transporter activity. The protein is Sodium-dependent phosphate transporter 1 (Slc20a1) of Rattus norvegicus (Rat).